Here is a 115-residue protein sequence, read N- to C-terminus: Large ribosomal subunit protein uL24 (115 aa).

This sequence belongs to the universal ribosomal protein uL24 family. Part of the 50S ribosomal subunit.

Functionally, one of two assembly initiator proteins, it binds directly to the 5'-end of the 23S rRNA, where it nucleates assembly of the 50S subunit. One of the proteins that surrounds the polypeptide exit tunnel on the outside of the subunit. This Aster yellows witches'-broom phytoplasma (strain AYWB) protein is Large ribosomal subunit protein uL24.